We begin with the raw amino-acid sequence, 252 residues long: Small ribosomal subunit protein uS2A (252 aa).

At Ser-2 the chain carries N-acetylserine. Residues 209–252 are disordered; sequence EVEQQAAEETTSTGADAEESKEEVAEGQNEASEWAEENTEAVSW. Residues 241 to 252 show a composition bias toward acidic residues; that stretch reads EWAEENTEAVSW.

It belongs to the universal ribosomal protein uS2 family. In terms of assembly, component of the small ribosomal subunit. Mature ribosomes consist of a small (40S) and a large (60S) subunit. The 40S subunit contains about 33 different proteins and 1 molecule of RNA (18S). The 60S subunit contains about 49 different proteins and 3 molecules of RNA (25S, 5.8S and 5S). Interacts with RPS21.

It localises to the cytoplasm. Its function is as follows. Required for the assembly and/or stability of the 40S ribosomal subunit. Required for the processing of the 20S rRNA-precursor to mature 18S rRNA in a late step of the maturation of 40S ribosomal subunits. The polypeptide is Small ribosomal subunit protein uS2A (Vanderwaltozyma polyspora (strain ATCC 22028 / DSM 70294 / BCRC 21397 / CBS 2163 / NBRC 10782 / NRRL Y-8283 / UCD 57-17) (Kluyveromyces polysporus)).